The chain runs to 505 residues: MGRVVAELVSSLLGLWLLLCSCGCPEGAELRAPPDKIAIIGAGIGGTSAAYYLRQKFGKDVKIDLFEREEVGGRLATMMVQGQEYEAGGSVIHPLNLRMKRFVKDLGLSTVQASGGLLGIYNGETLVFEESNWFIINVIKLVWRYGFQSLRMHMWVEDVLDKFMRIYRYQSHDYAFSSVEKLLHALGGDDFLGMLNRTLLETLQKAGFSEKFLNEMIAPVMRVNYGQSTDINAFVGAVSLSCSDSGLWAVEGGNKLVCSGLLQASKSNLISGSVMYIEEKTKTKHTGNPTKMYEVVYQIGTETRSDFYDIVLVATPLNRKMSNITFLNFDPPIEEFHQYYQHIVTTLVKGELNTSIFSSRPIDKFGLNTVLTTDNSDLFINSIGIVSSVREKEDPEPSTDGTYVWKIFSQETLTKAQILKLFLSYDYAVKKPWLAYPHYKPPEKCPSIILHDRLYYLNGIECAASAMEMSAIAAHNAALLAYHRWNRHTDMIDQDGLYEKLKTEL.

The N-terminal stretch at 1–27 (MGRVVAELVSSLLGLWLLLCSCGCPEG) is a signal peptide. Asn-196, Asn-323, and Asn-353 each carry an N-linked (GlcNAc...) asparagine glycan.

Belongs to the prenylcysteine oxidase family. Requires FAD as cofactor.

The protein localises to the lysosome. The enzyme catalyses an S-polyprenyl-L-cysteine + O2 + H2O = a polyprenal + L-cysteine + H2O2. It catalyses the reaction S-(2E,6E)-farnesyl-L-cysteine + O2 + H2O = (2E,6E)-farnesal + L-cysteine + H2O2. It carries out the reaction [(2E,6E,10E)-geranylgeranyl]-L-cysteine + O2 + H2O = (2E,6E,10E)-geranylgeranial + L-cysteine + H2O2. Functionally, prenylcysteine oxidase that cleaves the thioether bond of prenyl-L-cysteines, such as farnesylcysteine and geranylgeranylcysteine. Only active against free prenylcysteines and not prenylcysteine residues within prenylated proteins or peptides. Involved in the final step in the degradation of prenylated proteins, by degrading prenylcysteines after the protein has been degraded. The polypeptide is Prenylcysteine oxidase 1 (Pongo abelii (Sumatran orangutan)).